Here is a 427-residue protein sequence, read N- to C-terminus: O-methyltransferase FrzF (427 aa).

Residue Asp-281 coordinates S-adenosyl-L-methionine. Residue His-327 is the Proton acceptor of the active site.

This sequence belongs to the class I-like SAM-binding methyltransferase superfamily. Cation-independent O-methyltransferase family. As to quaternary structure, homodimer.

The catalysed reaction is (1S,4S)-4-[(4-hydroxyphenyl)methyl]-2,5-diazaspiro[bicyclo[3.2.1]octane-6,1'-cyclohexan]-4'-one + S-adenosyl-L-methionine = (1S,4S)-4-[(4-methoxyphenyl)methyl]-2,5-diazaspiro[bicyclo[3.2.1]octane-6,1'-cyclohexan]-4'-one + S-adenosyl-L-homocysteine + H(+). It carries out the reaction (1S,4S)-4-[(4-hydroxyphenyl)methyl]-2-methyl-2,5-diazaspiro[bicyclo[3.2.1]octane-6,1'-cyclohexan]-4'-one + S-adenosyl-L-methionine = (1S,4S)-4-[(4-methoxyphenyl)methyl]-2-methyl-2,5-diazaspiro[bicyclo[3.2.1]octane-6,1'-cyclohexan]-4'-one + S-adenosyl-L-homocysteine + H(+). It functions in the pathway secondary metabolite biosynthesis. Its function is as follows. O-methyltransferase; part of the gene cluster that mediates the biosynthesis of the alkaloid (-)-FR901483, a potent immunosuppressant that shows efficacy in animal models and a probable inhibitor of purine nucleotide biosynthesis by targeting phosphoribosylpyrophosphate amidotransferase (PPAT). Within the pathway, FrzF methylates the phenolic oxygen at position C4. The biosynthesis of (-)-FR901483 starts with the condensation of two L-tyrosines to yield (S,S)-dityrosyl-piperazine. This process occurs in 3 steps with the non-canonical nonribosomal peptide synthetase FrzA catalyzing the reduction of L-tyrosine into L-tyrosinal, the spontaneous condensation of 2 L-tyrosinal units, and the subsequent reduction by the NmrA-like family domain-containing oxidoreductase FrzB. The cytochrome P450 monooxygenase FrzC then performs coupling between N10 and C1' to morph the piperazine into a 1,4-diazabicyclo[3.2.1]octane spiro-fused to a 2,5-cyclohexadienone. The dienone portion is further reduced to cyclohexanone by the flavin-dependent reductase FrzD. The methyltranserases (MTs) FrzE and FrzF are then involved in the methylation at the C10' amine and the C4 phenolic oxygen, respectively. The order of the two MTs appear to be interchangeable. Cleavage of the C9-N10' bond by the dioxygenase FrzG then leads to formation of a conjugated iminium. In addition to the oxidation of C9, an additional dehydrogenation between C7 and C8 can occur to give a likely shunt product. The next biosynthetic step is the intramolecular aldol condensation catalyzed by the newly identified aldolase FrzH to yield an aza-tricyclic product with the formation of a C9-C3' bond. The short-chain dehydrogenase/reductase FrzI then produces dephospho-(-)-FR901483 that is phosphorylated at C4'-OH into (-)-FR901483 by the phosphotransferase FrzJ. In Cladobotryum sp, this protein is O-methyltransferase FrzF.